We begin with the raw amino-acid sequence, 365 residues long: tRNA/tmRNA (uracil-C(5))-methyltransferase (365 aa).

S-adenosyl-L-methionine contacts are provided by glutamine 189, tyrosine 217, asparagine 222, glutamate 238, and aspartate 298. Residue cysteine 323 is the Nucleophile of the active site. Glutamate 357 (proton acceptor) is an active-site residue.

Belongs to the class I-like SAM-binding methyltransferase superfamily. RNA M5U methyltransferase family. TrmA subfamily.

The enzyme catalyses uridine(54) in tRNA + S-adenosyl-L-methionine = 5-methyluridine(54) in tRNA + S-adenosyl-L-homocysteine + H(+). The catalysed reaction is uridine(341) in tmRNA + S-adenosyl-L-methionine = 5-methyluridine(341) in tmRNA + S-adenosyl-L-homocysteine + H(+). Its function is as follows. Dual-specificity methyltransferase that catalyzes the formation of 5-methyluridine at position 54 (m5U54) in all tRNAs, and that of position 341 (m5U341) in tmRNA (transfer-mRNA). The polypeptide is tRNA/tmRNA (uracil-C(5))-methyltransferase (Shewanella loihica (strain ATCC BAA-1088 / PV-4)).